Consider the following 262-residue polypeptide: Transmembrane protein 81 (262 aa).

Residues 1–30 form the signal peptide; that stretch reads MKAVATVFICGSLVLITYLPLVVTSPQTLA. Residues 31–225 are Extracellular-facing; that stretch reads IPEKLRQAVG…HLPGWRKKVS (195 aa). An N-linked (GlcNAc...) asparagine glycan is attached at N45. An Ig-like domain is found at 83-171; that stretch reads TNWICGMLHF…VQQLKNLKLV (89 aa). The cysteines at positions 104 and 160 are disulfide-linked. The N-linked (GlcNAc...) asparagine glycan is linked to N211. The chain crosses the membrane as a helical span at residues 226–246; sequence LALGVGIAAGVVGGVLVNVAL. At 247-262 the chain is on the cytoplasmic side; it reads CRVLGGTGGNGNLSSL.

As to quaternary structure, forms a complex with IZUMO1 and SPACA6 on spermatocyte cell membrane required for fertilization.

It localises to the cell membrane. Functionally, essential fertilization factor required for male fertility. Part of a conserved trimeric sperm complex with the essential fertilization factors IZUMO1 and SPACA6 which bridges sperm and oocyte membranes during fertilization by binding to IZUMO1R/JUNO on the oocyte. The protein is Transmembrane protein 81 (Tmem81) of Rattus norvegicus (Rat).